We begin with the raw amino-acid sequence, 237 residues long: Ribose-5-phosphate isomerase A (237 aa).

Residues 33–36 (TGST), 90–93 (DGAD), and 103–106 (KGGG) each bind substrate. The Proton acceptor role is filled by Glu112. A substrate-binding site is contributed by Lys130.

Belongs to the ribose 5-phosphate isomerase family. As to quaternary structure, homodimer.

It carries out the reaction aldehydo-D-ribose 5-phosphate = D-ribulose 5-phosphate. Its pathway is carbohydrate degradation; pentose phosphate pathway; D-ribose 5-phosphate from D-ribulose 5-phosphate (non-oxidative stage): step 1/1. Catalyzes the reversible conversion of ribose-5-phosphate to ribulose 5-phosphate. The chain is Ribose-5-phosphate isomerase A from Trichodesmium erythraeum (strain IMS101).